The sequence spans 927 residues: Protein unc-45 homolog B (927 aa).

TPR repeat units follow at residues 4–37, 41–74, and 76–108; these read PVQL…ITDK, AVLY…DASD, and KALF…EPKN. ARM repeat units lie at residues 167 to 206, 209 to 248, and 746 to 785; these read DAGA…GMCT, RARA…NIVD, and DKLR…NLAV.

It is found in the cytoplasm. Its subcellular location is the myofibril. The protein localises to the sarcomere. It localises to the z line. The protein resides in the a band. It is found in the perinuclear region. Its subcellular location is the cytosol. Its function is as follows. Acts as a co-chaperone for HSP90 and is required for proper folding of the myosin motor domain. Plays a role in sarcomere formation during muscle cell assembly. Is necessary for normal early lens development. The sequence is that of Protein unc-45 homolog B from Xenopus laevis (African clawed frog).